A 234-amino-acid chain; its full sequence is Ribonuclease Trv (234 aa).

Disulfide bonds link Cys-5/Cys-24, Cys-13/Cys-59, Cys-23/Cys-125, Cys-67/Cys-117, and Cys-189/Cys-224. N-linked (GlcNAc...) asparagine glycosylation is present at Asn-15. His-52 is an active-site residue. A glycan (N-linked (GlcNAc...) asparagine) is linked at Asn-75. Residues Glu-110 and His-114 contribute to the active site.

It belongs to the RNase T2 family.

It catalyses the reaction a ribonucleotidyl-ribonucleotide-RNA + H2O = a 3'-end 3'-phospho-ribonucleotide-RNA + a 5'-end dephospho-ribonucleoside-RNA + H(+). In terms of biological role, this is a base non-specific and adenylic acid preferential ribonuclease. The protein is Ribonuclease Trv of Hypocrea rufa (Trichoderma viride).